Here is a 98-residue protein sequence, read N- to C-terminus: NADH-ubiquinone oxidoreductase chain 4L (98 aa).

Transmembrane regions (helical) follow at residues 1-21, 29-49, and 61-81; these read MPLI…GMLI, SLLC…LMAL, and VVLL…LVSI.

Belongs to the complex I subunit 4L family. As to quaternary structure, core subunit of respiratory chain NADH dehydrogenase (Complex I) which is composed of 45 different subunits.

It is found in the mitochondrion inner membrane. The enzyme catalyses a ubiquinone + NADH + 5 H(+)(in) = a ubiquinol + NAD(+) + 4 H(+)(out). Core subunit of the mitochondrial membrane respiratory chain NADH dehydrogenase (Complex I) which catalyzes electron transfer from NADH through the respiratory chain, using ubiquinone as an electron acceptor. Part of the enzyme membrane arm which is embedded in the lipid bilayer and involved in proton translocation. The polypeptide is NADH-ubiquinone oxidoreductase chain 4L (MT-ND4L) (Hylobates lar (Lar gibbon)).